The primary structure comprises 362 residues: CLIP domain-containing serine protease B10 (362 aa).

A signal peptide spans 1–19 (MAKVVDCVLLLAFIAVVRG). Residues 22 to 75 (ACRTPDHRDGVCHPVQQCPSVRDEFFNSDRVLSEDEIDYLRKLQCKTKDVTICC) enclose the Clip domain. Cystine bridges form between Cys23-Cys74, Cys33-Cys66, and Cys39-Cys75. In terms of domain architecture, Peptidase S1 spans 110–361 (IIGGNYTAID…YLDWIRQNIR (252 aa)). Asn114 is a glycosylation site (N-linked (GlcNAc...) asparagine). A disulfide bond links Cys140 and Cys156. Catalysis depends on charge relay system residues His155 and Asp220. N-linked (GlcNAc...) asparagine glycosylation is present at Asn254. 2 disulfide bridges follow: Cys285–Cys300 and Cys310–Cys337. Residue Ser314 is the Charge relay system of the active site.

Belongs to the peptidase S1 family. CLIP subfamily. As to quaternary structure, forms a covalent heterodimer with SRPN2; the interaction inhibits CLIPB10 catalytic activity. Cleaved by an unknown protease into an active form.

It localises to the secreted. Its activity is regulated as follows. Inhibited by serpin SRPN2. Serine protease which preferentially cleaves after arginine residues. Involved in the innate immune response against parasite P.bergei infection by activating the melanization cascade. Probably in the hemolymph, cleaves and activates prophenoloxidase (PPO), which functions in the formation of pigments such as melanin and other polyphenolic compounds. In the susceptible strain G3, appears to be dispensable for ookinete elimination which occurs by lysis. This is CLIP domain-containing serine protease B10 from Anopheles gambiae (African malaria mosquito).